We begin with the raw amino-acid sequence, 488 residues long: Probable malate:quinone oxidoreductase (488 aa).

This sequence belongs to the MQO family. FAD serves as cofactor.

The enzyme catalyses (S)-malate + a quinone = a quinol + oxaloacetate. It functions in the pathway carbohydrate metabolism; tricarboxylic acid cycle; oxaloacetate from (S)-malate (quinone route): step 1/1. In Neisseria meningitidis serogroup A / serotype 4A (strain DSM 15465 / Z2491), this protein is Probable malate:quinone oxidoreductase.